The primary structure comprises 858 residues: Zinc finger protein ZXDC (858 aa).

2 disordered regions span residues 1–127 and 151–174; these read MDLP…APAG and PGPATAGAAAPRRAPQASGPSTPG. 3 stretches are compositionally biased toward low complexity: residues 23–35, 84–97, and 151–171; these read PLRRAPAPLGASP, GGAAAEAAGSQEAE, and PGPATAGAAAPRRAPQASGPS. Serine 34 is subject to Phosphoserine. Threonine 172 carries the phosphothreonine modification. 10 consecutive C2H2-type zinc fingers follow at residues 175–199, 208–232, 238–262, 268–290, 297–321, 328–352, 358–382, 388–412, 418–442, and 451–476; these read YRCPEPQCALAFAKKHQLKVHLLTH, FKCPLEGCGWAFTTSYKLKRHLQSH, FGCPVGGCGKKFTTVYNLKAHMKGH, FKCEVCAERFPTHAKLSSHQRSH, YKCDFPGCEKTFITVSALFSHNRAH, FSCSFPGCSKQYDKACRLKIHLRSH, FICDSDSCGWTFTSMSKLLRHRRKH, FTCPVEGCGKSFTRAEHLKGHSITH, FECPVEGCCARFSARSSLYIHSKKH, and SRCPVSTCNRLFTSKHSMKAHMVRQH. A required for transcriptional activation region spans residues 579 to 688; that stretch reads DSPLVLGTAA…HGLPQSTLPS (110 aa). Residue lysine 660 forms a Glycyl lysine isopeptide (Lys-Gly) (interchain with G-Cter in SUMO) linkage. Disordered regions lie at residues 660-696, 726-756, and 837-858; these read KVEPDSPSRPGAVGQQEGSHGLPQSTLPSPAEQHGAQ, KEKKQRGAGSNAGASQSTQRKIKEGKMSPPH, and GGPAGPEATQFPGSTINLQDLQ. Position 665 is a phosphoserine (serine 665). Positions 675–687 are enriched in polar residues; the sequence is QEGSHGLPQSTLP. An interaction with CIITA region spans residues 781-858; that stretch reads PAAGVQCGAQ…GSTINLQDLQ (78 aa). A compositionally biased stretch (polar residues) spans 847–858; the sequence is FPGSTINLQDLQ.

Belongs to the ZXD family. In terms of assembly, self-associates. Interacts with ZXDA and CIITA. Sumoylated at Lys-660 with SUMO1, SUMO2 and SUMO3; sumoylation enhances the activity of the transcriptional activation domain. In terms of tissue distribution, expressed at high levels in heart, kidney, liver and testis, at moderate levels in brain and stomach, and at low levels in lung, muscle, placenta, small intestine and spleen.

Its subcellular location is the nucleus. Cooperates with CIITA to promote transcription of MHC class I and MHC class II genes. The polypeptide is Zinc finger protein ZXDC (ZXDC) (Homo sapiens (Human)).